The chain runs to 2971 residues: Reticulocyte-binding protein homolog 1 (2971 aa).

The N-terminal stretch at M1–F20 is a signal peptide. At S21–R2897 the chain is on the extracellular side. A disordered region spans residues N30 to E50. 7 N-linked (GlcNAc...) asparagine glycosylation sites follow: N70, N78, N87, N135, N286, N384, and N417. The erythrocyte binding domain (EBD) stretch occupies residues L500–N833. LRR repeat units lie at residues Y528–D553 and L607–K633. N-linked (GlcNAc...) asparagine glycosylation occurs at N685. 2 LRR repeats span residues I736–D758 and Q785–E808. 4 N-linked (GlcNAc...) asparagine glycosylation sites follow: N830, N892, N1000, and N1010. LRR repeat units lie at residues L993–D1018 and L1356–E1381. The N-linked (GlcNAc...) asparagine glycan is linked to N1425. Residues A1466–E1489 form an LRR 7 repeat. A glycan (N-linked (GlcNAc...) asparagine) is linked at N1496. LRR repeat units lie at residues Y1512–N1537, S1586–E1609, and E1611–N1636. 5 N-linked (GlcNAc...) asparagine glycosylation sites follow: N1664, N1692, N1718, N1816, and N1844. 2 LRR repeats span residues L1700 to Y1723 and L1809 to N1834. Residues Q1880–E1903 form an LRR 13 repeat. N-linked (GlcNAc...) asparagine glycans are attached at residues N1913 and N1918. The stretch at K1944 to F1967 is one LRR 14 repeat. N-linked (GlcNAc...) asparagine glycans are attached at residues N2054, N2207, N2289, N2300, N2338, and N2405. Residues I2523 to I2548 form an LRR 15 repeat. N2598 and N2752 each carry an N-linked (GlcNAc...) asparagine glycan. The stretch at E2731 to T2754 is one LRR 16 repeat. Basic and acidic residues-rich tracts occupy residues K2773–N2782 and Q2795–L2804. Disordered stretches follow at residues K2773 to Q2825 and H2840 to Q2862. N2811 carries N-linked (GlcNAc...) asparagine glycosylation. The segment covering E2814–Q2825 has biased composition (basic and acidic residues). Residues M2898–I2918 form a helical membrane-spanning segment. At N2919–I2971 the chain is on the cytoplasmic side.

In terms of assembly, may in part interact with AMA1 in the moving tight junction between the parasite and the erythrocyte membranes; the interaction may facilitate junction formation and active invasion. In terms of processing, proteolytically processed into multiple fragments following schizont rupture. In the mature schizont stage prior to merozoite release, full length RH1 is processed post-Golgi into a 240 kDa N-terminal form and a 120 kDa C-terminal form containing the transmembrane region. Both forms appear not to form a complex. However, they appear to remain in close proximity in late schizonts. Following merozoite invasion of host erythrocytes, the 240 kDa form is further processed into a 140 kDa form which may be involved in the disengagement of the ligand-receptor complex required during the invasion process. Also, the 120 kDa is further cleaved into a 110 kDa form and a transmembrane 9 kDa form probably by ROM4.

It is found in the cell membrane. Its subcellular location is the secreted. The protein resides in the cell junction. The protein localises to the tight junction. It localises to the cytoplasmic vesicle. It is found in the secretory vesicle. Its subcellular location is the rhoptry. Functionally, during the asexual blood stage, binds to a sialic acid containing receptor on the surface of the host erythrocyte and thus is involved in merozoite invasion. Binds erythrocytes via a neuraminidase sensitive and trypsin-, chymotrypsin-resistant receptor. After merozoite attachment and reorientation, RH1 binding to its erythrocyte receptor triggers an increase in intracellular Ca(2+) within the parasite resulting in the release of microneme proteins such as EBA175 which in turn leads to the formation of the tight junction between parasite and host cell. This chain is Reticulocyte-binding protein homolog 1, found in Plasmodium falciparum (isolate 3D7).